The chain runs to 267 residues: Interleukin-2 receptor subunit alpha (267 aa).

The first 21 residues, 1-21 (MEPHLLMLGFLSFTIVPGCWA), serve as a signal peptide directing secretion. Positions 22–79 (ELCLYDPPEVPNATFKALSYKNGTILNCECKRGFRRLNELVYMACLGNSWSNNCQCTS) constitute a Sushi 1 domain. At 22–235 (ELCLYDPPEV…ETFVFTKEYQ (214 aa)) the chain is on the extracellular side. Disulfide bonds link Cys24-Cys66, Cys49-Cys75, and Cys51-Cys77. Residues Asn33 and Asn43 are each glycosylated (N-linked (GlcNAc...) asparagine). Positions 82-93 (HDNSREQVTPQP) are enriched in polar residues. The tract at residues 82 to 108 (HDNSREQVTPQPEGQKEQQTTDTQKST) is disordered. The span at 98 to 108 (EQQTTDTQKST) shows a compositional bias: low complexity. A Sushi 2 domain is found at 118–181 (GHCREPPPWR…WTHPQLTCVD (64 aa)). Disulfide bonds link Cys120-Cys163 and Cys147-Cys179. Positions 191–215 (SEESQGSRNSFPESEASCPTPNTDF) are disordered. Residues 192-215 (EESQGSRNSFPESEASCPTPNTDF) show a composition bias toward polar residues. Residues 236–256 (VAVASCIFLLLSILLLSGFTW) traverse the membrane as a helical segment. The Cytoplasmic segment spans residues 257 to 267 (QHRWRKSRRTI).

As to quaternary structure, non-covalent dimer of an alpha and a beta subunit. IL2R exists in 3 different forms: a high affinity dimer, an intermediate affinity monomer (beta subunit), and a low affinity monomer (alpha subunit). The high and intermediate affinity forms also associate with a gamma subunit.

The protein localises to the membrane. Its function is as follows. Receptor for interleukin-2. The receptor is involved in the regulation of immune tolerance by controlling regulatory T cells (TREGs) activity. TREGs suppress the activation and expansion of autoreactive T-cells. The chain is Interleukin-2 receptor subunit alpha (Il2ra) from Rattus norvegicus (Rat).